The sequence spans 428 residues: MTTLSPYDSMSPVTRAAYRAKSAAADLAPLPRAAKDDALLAVADALEVRTSEIVEANAQDVAKARAAGTSEAIVDRLTLTPERVRAIASDVRDVVALPDPVGEIVRGSTLPNGIDLRQVRVPLGVVGIIYEGRPNVTVDAAALCLKSGNAVLLRGSSSAYRSNTALVRVVRDAVGGAGLPADAVQLVPGESRESVRELMRARGLVDVLIPRGGASLISTVVQESTVPVIETGTGNCHVYVDAHADLDMAVDILINSKAQRVGVCNAAETLLVHQDVAAEFLPRALAALAEAGVTVHADERVMAHAKDSGANVVEATPEDWETEYLSYDIAAAVVDSLDRAVEHIRLWTSGHTEAIVTTSQQAARRFTQLVDSTTVAVNTSTRFTDGGQFGFGAEIGISTQKLHARGPMGLPELTSTKYIVTGDGHVRR.

This sequence belongs to the gamma-glutamyl phosphate reductase family.

Its subcellular location is the cytoplasm. It carries out the reaction L-glutamate 5-semialdehyde + phosphate + NADP(+) = L-glutamyl 5-phosphate + NADPH + H(+). It participates in amino-acid biosynthesis; L-proline biosynthesis; L-glutamate 5-semialdehyde from L-glutamate: step 2/2. In terms of biological role, catalyzes the NADPH-dependent reduction of L-glutamate 5-phosphate into L-glutamate 5-semialdehyde and phosphate. The product spontaneously undergoes cyclization to form 1-pyrroline-5-carboxylate. In Streptomyces coelicolor (strain ATCC BAA-471 / A3(2) / M145), this protein is Gamma-glutamyl phosphate reductase.